The chain runs to 116 residues: MRHQLRVPKLGRPADQRKAILRGLTTQLIREGRVTTTKAKAKALRNEAERMITLAKEGTLAARRRAIGYIYDKKLVHQLFEKAQDRYGDREGGYTRIVRTVPRRGDNAEMAIIELV.

The protein belongs to the bacterial ribosomal protein bL17 family. In terms of assembly, part of the 50S ribosomal subunit. Contacts protein L32.

This chain is Large ribosomal subunit protein bL17, found in Prochlorococcus marinus (strain MIT 9211).